A 332-amino-acid polypeptide reads, in one-letter code: CAX-interacting protein 4 (332 aa).

Residues 33-59 (GYDPYAPTSKEEPKTTQQKTEDPENSY) form a disordered region. Residues 41–54 (SKEEPKTTQQKTED) show a composition bias toward basic and acidic residues. The CCHC-type zinc finger occupies 81–98 (GSCKKCGRVGHLTFQCRN). Positions 124-133 (IRRGVGKGEV) are enriched in basic and acidic residues. The interval 124-332 (IRRGVGKGEV…RKRHHRKERE (209 aa)) is disordered. The span at 134–153 (EEVSSEEEEESESSDSDVDS) shows a compositional bias: acidic residues. Over residues 154-163 (EMERIIAERF) the composition is skewed to basic and acidic residues. Composition is skewed to basic residues over residues 198–214 (RKRR…HKRR) and 227–236 (SKRRKERRGR). Positions 241–250 (DDSDESEDED) are enriched in acidic residues. 2 stretches are compositionally biased toward basic residues: residues 254–269 (VKRK…RSRR) and 314–332 (SSKR…KERE).

In terms of assembly, interacts with CAX1. In terms of tissue distribution, expressed in leaves, stems and roots, and at lower levels in flowers.

It is found in the nucleus. May regulate CAX1 cation transporter. The polypeptide is CAX-interacting protein 4 (CXIP4) (Arabidopsis thaliana (Mouse-ear cress)).